Here is a 102-residue protein sequence, read N- to C-terminus: Small ribosomal subunit protein uS10 (102 aa).

It belongs to the universal ribosomal protein uS10 family. Part of the 30S ribosomal subunit.

Functionally, involved in the binding of tRNA to the ribosomes. This Bacillus subtilis (strain 168) protein is Small ribosomal subunit protein uS10 (rpsJ).